Here is a 421-residue protein sequence, read N- to C-terminus: Putative transporter AmpG 3 (421 aa).

The next 12 membrane-spanning stretches (helical) occupy residues 6-26, 41-61, 80-100, 104-124, 139-159, 166-186, 230-250, 274-294, 297-317, 324-344, 360-380, and 388-408; these read YLIGILLLGLISGLTFNLIFF, IIGAISLAAFPYCLKVIWSPF, WALVSQIFLILAMMWFLKRSP, LCITAIILFIIAFFSSTQDIV, LSIVFTFSSIGFRLGMLLGSV, IIFGWNTVYKFALFITMVGPI, LLLIILFVFLYKAADSIPMAM, LLIMIVGGTLGGILAAKIGIF, VLIGGVIQLLSPLMFMILATI, FIITITIQNFCSGFAGTIISI, AISASFSSLSRIILASLGGIC, and VFFLCNTLFSMLFIPIFYTIY.

Belongs to the major facilitator superfamily.

The protein localises to the cell inner membrane. This chain is Putative transporter AmpG 3 (ampG3), found in Rickettsia prowazekii (strain Madrid E).